A 417-amino-acid chain; its full sequence is UDP-N-acetylglucosamine 1-carboxyvinyltransferase (417 aa).

22 to 23 lines the phosphoenolpyruvate pocket; the sequence is KN. UDP-N-acetyl-alpha-D-glucosamine is bound at residue R93. C117 acts as the Proton donor in catalysis. Residue C117 is modified to 2-(S-cysteinyl)pyruvic acid O-phosphothioketal. Residues 122 to 126, D305, and I327 contribute to the UDP-N-acetyl-alpha-D-glucosamine site; that span reads RPVDQ.

The protein belongs to the EPSP synthase family. MurA subfamily.

The protein localises to the cytoplasm. It catalyses the reaction phosphoenolpyruvate + UDP-N-acetyl-alpha-D-glucosamine = UDP-N-acetyl-3-O-(1-carboxyvinyl)-alpha-D-glucosamine + phosphate. It functions in the pathway cell wall biogenesis; peptidoglycan biosynthesis. Its function is as follows. Cell wall formation. Adds enolpyruvyl to UDP-N-acetylglucosamine. The sequence is that of UDP-N-acetylglucosamine 1-carboxyvinyltransferase from Chromobacterium violaceum (strain ATCC 12472 / DSM 30191 / JCM 1249 / CCUG 213 / NBRC 12614 / NCIMB 9131 / NCTC 9757 / MK).